A 464-amino-acid polypeptide reads, in one-letter code: Cysteine--tRNA ligase (464 aa).

Residue Cys27 coordinates Zn(2+). Positions Pro29–Asn39 match the 'HIGH' region motif. Zn(2+) is bound by residues Cys207, His232, and Glu236. A 'KMSKS' region motif is present at residues Lys264–Ser268. Lys267 provides a ligand contact to ATP.

The protein belongs to the class-I aminoacyl-tRNA synthetase family. As to quaternary structure, monomer. It depends on Zn(2+) as a cofactor.

The protein localises to the cytoplasm. It catalyses the reaction tRNA(Cys) + L-cysteine + ATP = L-cysteinyl-tRNA(Cys) + AMP + diphosphate. This Alkaliphilus oremlandii (strain OhILAs) (Clostridium oremlandii (strain OhILAs)) protein is Cysteine--tRNA ligase.